The following is a 317-amino-acid chain: L-lactate dehydrogenase 1 (317 aa).

Residues V17, D38, K43, Y69, and 83 to 84 (GA) contribute to the NAD(+) site. Q86 and R92 together coordinate substrate. NAD(+) is bound by residues S105, 122 to 124 (ATN), and S147. 124-127 (NPVD) contributes to the substrate binding site. Substrate is bound at residue 152-155 (DSAR). Residue H179 is the Proton acceptor of the active site. Y223 carries the post-translational modification Phosphotyrosine. T232 serves as a coordination point for substrate.

This sequence belongs to the LDH/MDH superfamily. LDH family. Homotetramer.

The protein resides in the cytoplasm. The catalysed reaction is (S)-lactate + NAD(+) = pyruvate + NADH + H(+). It functions in the pathway fermentation; pyruvate fermentation to lactate; (S)-lactate from pyruvate: step 1/1. In terms of biological role, catalyzes the conversion of lactate to pyruvate (Potential). Appears to be the primary factor that allows S.aureus growth during nitrosative stress in both aerobically and anaerobically cultured cells. The sequence is that of L-lactate dehydrogenase 1 from Staphylococcus aureus (strain USA300).